A 218-amino-acid polypeptide reads, in one-letter code: MFAIISAGIAPGIALLSYFYLKDQYDNEPVHMVLRSFFLGVVLVFPIMFIQYVLEKENVGGGSFFVSFLSSGFLEESLKWFILMISVYPHAHFDEHYDGIVYGASVSLGFATLENILYLIGHGVEHAFVRALLPVSCHALIGVIMGFYLGKARFSADKARVKWLTLSLVVPSLLHGSYDFILTALSNWIYYMLPFMVFLWWFGLRKAKKARSVNMMQV.

A helical transmembrane segment spans residues Met-1 to Asp-23. Over Gln-24 to Val-30 the chain is Cytoplasmic. A helical membrane pass occupies residues His-31–Val-53. Topologically, residues Leu-54–Asp-98 are extracellular. A helical membrane pass occupies residues Gly-99–Gly-121. Over His-122–Val-129 the chain is Cytoplasmic. Residues Arg-130–Lys-151 traverse the membrane as a helical segment. Residues Ala-152–Phe-180 lie on the Extracellular side of the membrane. Residues Ile-181–Gly-203 traverse the membrane as a helical segment. Topologically, residues Leu-204 to Val-218 are cytoplasmic.

Belongs to the protease PrsW family.

It is found in the cell membrane. Functionally, involved in the degradation of anti-sigma-W factor RsiW. Responsible for Site-1 cleavage of the RsiW anti-sigma factor. This results, after two other proteolytic steps catalyzed by the RasP and ClpXP proteases, in the release of SigW and the transcription activation of the genes under the control of the sigma-W factor. Seems to be responsible for sensing antimicrobial peptides that damage the cell membrane and other agents that cause cell envelope stress. Therefore it is a protease governing regulated intramembrane proteolysis and resistance to antimicrobial peptides in B.subtilis. This Bacillus subtilis (strain 168) protein is Protease PrsW.